The sequence spans 159 residues: Transcription elongation factor GreA (159 aa).

The protein belongs to the GreA/GreB family.

Necessary for efficient RNA polymerase transcription elongation past template-encoded arresting sites. The arresting sites in DNA have the property of trapping a certain fraction of elongating RNA polymerases that pass through, resulting in locked ternary complexes. Cleavage of the nascent transcript by cleavage factors such as GreA or GreB allows the resumption of elongation from the new 3'terminus. GreA releases sequences of 2 to 3 nucleotides. The polypeptide is Transcription elongation factor GreA (Psychromonas ingrahamii (strain DSM 17664 / CCUG 51855 / 37)).